Reading from the N-terminus, the 366-residue chain is Chorismate synthase (366 aa).

The NADP(+) site is built by arginine 48 and arginine 54. FMN contacts are provided by residues 125-127 (RSS), 238-239 (NA), glycine 278, 293-297 (KPTSS), and arginine 319.

This sequence belongs to the chorismate synthase family. Homotetramer. The cofactor is FMNH2.

The catalysed reaction is 5-O-(1-carboxyvinyl)-3-phosphoshikimate = chorismate + phosphate. The protein operates within metabolic intermediate biosynthesis; chorismate biosynthesis; chorismate from D-erythrose 4-phosphate and phosphoenolpyruvate: step 7/7. Functionally, catalyzes the anti-1,4-elimination of the C-3 phosphate and the C-6 proR hydrogen from 5-enolpyruvylshikimate-3-phosphate (EPSP) to yield chorismate, which is the branch point compound that serves as the starting substrate for the three terminal pathways of aromatic amino acid biosynthesis. This reaction introduces a second double bond into the aromatic ring system. This Neisseria meningitidis serogroup C / serotype 2a (strain ATCC 700532 / DSM 15464 / FAM18) protein is Chorismate synthase.